The following is a 260-amino-acid chain: Small ribosomal subunit protein eS1 (260 aa).

K30 bears the N6-acetyllysine; alternate mark. Residue K30 forms a Glycyl lysine isopeptide (Lys-Gly) (interchain with G-Cter in SUMO2); alternate linkage. K52 carries the post-translational modification N6-acetyllysine. Y151 bears the ADP-ribosyltyrosine mark. A disordered region spans residues 228–260 (HGEGSSSGKATGDETGAKVERADGYEPPVQESV). S232 and S233 each carry phosphoserine. The span at 238–251 (TGDETGAKVERADG) shows a compositional bias: basic and acidic residues. Residue K245 is modified to N6-acetyllysine; alternate. A Glycyl lysine isopeptide (Lys-Gly) (interchain with G-Cter in SUMO2); alternate cross-link involves residue K245. At Y252 the chain carries Phosphotyrosine. The residue at position 259 (S259) is a Phosphoserine.

Belongs to the eukaryotic ribosomal protein eS1 family. As to quaternary structure, component of the small ribosomal subunit. Mature ribosomes consist of a small (40S) and a large (60S) subunit. The 40S subunit contains about 33 different proteins and 1 molecule of RNA (18S). The 60S subunit contains about 49 different proteins and 3 molecules of RNA (28S, 5.8S and 5S). Identified in a IGF2BP1-dependent mRNP granule complex containing untranslated mRNAs. Binds with high affinity to IPO4. Interacts with DDIT3. Part of the small subunit (SSU) processome, composed of more than 70 proteins and the RNA chaperone small nucleolar RNA (snoRNA) U3. In terms of processing, ADP-ribosylated at Tyr-151 by PARP1 in presence of HPF1.

The protein resides in the cytoplasm. It localises to the nucleus. Its subcellular location is the nucleolus. Its function is as follows. Component of the small ribosomal subunit. The ribosome is a large ribonucleoprotein complex responsible for the synthesis of proteins in the cell. Part of the small subunit (SSU) processome, first precursor of the small eukaryotic ribosomal subunit. During the assembly of the SSU processome in the nucleolus, many ribosome biogenesis factors, an RNA chaperone and ribosomal proteins associate with the nascent pre-rRNA and work in concert to generate RNA folding, modifications, rearrangements and cleavage as well as targeted degradation of pre-ribosomal RNA by the RNA exosome. May play a role during erythropoiesis through regulation of transcription factor DDIT3. The sequence is that of Small ribosomal subunit protein eS1 from Felis catus (Cat).